The following is a 1184-amino-acid chain: Calcium-activated potassium channel subunit alpha-1a (1184 aa).

Topologically, residues 1-39 (MSNNINFNKNPDSSVSISKMDVIIPFTPDVPCDNNGQRM) are extracellular. The helical transmembrane segment at 40–60 (WWAFLASSMVTFFGGLFIILL) threads the bilayer. Residues 61 to 132 (WRTLKYLWTV…MISAQTLTGR (72 aa)) are Cytoplasmic-facing. S-palmitoyl cysteine attachment occurs at residues C71, C72, and C74. Residues 133–153 (VLVVLVFALSIGALGIYFIDS) form a helical membrane-spanning segment. Residues 154-168 (SDPIESCQNFYKDFT) lie on the Extracellular side of the membrane. The helical transmembrane segment at 169-189 (LQIDMAFNVFFLLYFGLRFIA) threads the bilayer. The Cytoplasmic segment spans residues 190–193 (ANDK). The chain crosses the membrane as a helical span at residues 194–214 (LWFWLEVNSVVDFFTVPPVFV). Residues 215–254 (SVYLNRSWLGLRFLRALRLIQFSEILQFLNILKTSNSIKL) lie on the Extracellular side of the membrane. Residues 255 to 275 (VNLCSIFISTWLTAAGFIHLV) traverse the membrane as a helical segment. Residues 276 to 289 (ENSGDPWENFQNSQ) lie on the Cytoplasmic side of the membrane. The helical transmembrane segment at 290-310 (PLSYWECVYLLMVTMSTVGYG) threads the bilayer. Residues 311–321 (DVYARTTLGRL) are Extracellular-facing. A helical transmembrane segment spans residues 322–342 (FMVFFILGGLAMFASYVPEII). Residues 343 to 1184 (ELIGNRKKYG…PPIREVEDEC (842 aa)) lie on the Cytoplasmic side of the membrane. The RCK N-terminal 1 domain maps to 361-503 (RKHIVVCGHI…WNWKEGDDAI (143 aa)). 3 residues coordinate Mg(2+): E393, Q416, and E418. N468 provides a ligand contact to Ca(2+). The tract at residues 655–677 (EHPSTLSPKKKQRNGGMRNSPNC) is disordered. T659 is subject to Phosphothreonine. Phosphoserine occurs at positions 661, 674, and 678. The region spanning 735 to 879 (SGHVVVCIFG…MDRSSPDNSP (145 aa)) is the RCK N-terminal 2 domain. Residue T866 is modified to Phosphothreonine. Phosphoserine occurs at positions 874 and 878. Residues Q908, D911, D914, and D916 each contribute to the Ca(2+) site. Residues 908-916 (QFLDQDDDD) carry the Calcium bowl motif. The tract at residues 1082–1143 (RASLSHSSHS…PEKRWFTDEA (62 aa)) is disordered. Positions 1084–1104 (SLSHSSHSSHSSSKKSSSVHS) are enriched in low complexity. Basic and acidic residues predominate over residues 1116 to 1125 (KAREARDKQN).

Belongs to the potassium channel family. Calcium-activated (TC 1.A.1.3) subfamily. KCa1.1/KCNMA1 sub-subfamily. In terms of assembly, homotetramer; which constitutes the calcium-activated potassium channel. Phosphorylated. In terms of processing, palmitoylated.

The protein localises to the cell membrane. The enzyme catalyses K(+)(in) = K(+)(out). Potassium channel activated by both membrane depolarization or increase in cytosolic Ca(2+) that mediates export of K(+). It is also activated by the concentration of cytosolic Mg(2+). Its activation dampens the excitatory events that elevate the cytosolic Ca(2+) concentration and/or depolarize the cell membrane. It therefore contributes to repolarization of the membrane potential. Involved in determining peripheral auditory sensitivity. The protein is Calcium-activated potassium channel subunit alpha-1a of Danio rerio (Zebrafish).